The primary structure comprises 101 residues: Small ribosomal subunit protein uS14 (101 aa).

The protein belongs to the universal ribosomal protein uS14 family. In terms of assembly, part of the 30S ribosomal subunit. Contacts proteins S3 and S10.

Binds 16S rRNA, required for the assembly of 30S particles and may also be responsible for determining the conformation of the 16S rRNA at the A site. This Blochmanniella floridana protein is Small ribosomal subunit protein uS14.